The sequence spans 280 residues: BURP domain protein USPL1 (280 aa).

Residues 1–24 (MASTFRLSISFLTLILFSLWVVEA) form the signal peptide. The BURP domain occupies 58-280 (YFTLNDLKLG…PLDNIVWVTK (223 aa)).

In terms of tissue distribution, expressed in cotyledons, radicle, floral buds, open flowers, roots and developing seeds, but not in leaves. Highly expressed in the root tips. Detected in young leaves, hypocotyls, stems and mature seed funiculum.

The protein resides in the protein storage vacuole. The protein localises to the golgi apparatus. It is found in the golgi stack. It localises to the trans-Golgi network. Its subcellular location is the prevacuolar compartment. Associated with the protein storage vacuole formation. In Arabidopsis thaliana (Mouse-ear cress), this protein is BURP domain protein USPL1.